Consider the following 911-residue polypeptide: MPVRKQDTQRALHLLEEYRSKLSQTEDRQLRSSIERVISIFQSNLFQALIDIQEFYEVTLLDNPKCVDHSKQCEPVQPGNPWESGSLSSAAVTSESLPGGLSPPVEKYRYQDEEVLPSERISPQVPNEVLGPELVHVSEKSLSEIENVHGFVSHSHISPIKPTEAVPPSSPIVPVTPALPVPAESPVVLPSTPQANPPPVLVNTDSLETPTYVNGTDADYEYEEITLERGNSGLGFSIAGGTDNPHIGDDSSIFITKIITGGAAAQDGRLRVNDCILRVNEADVRDVTHSKAVEALKEAGSIVRLYVKRRKAFRKNHEIKLIKGPKGLGFSIAGGVGNQHIPGDNSIYVTKIIEGGAAHKDGKLQIGDKLLAVNSVCLEEVTHEEAVTALKNTSDFVYLKAAKPTSMYINDGYAPPDITNSSSQSVDNHVSPSSYLGQTPASPARYSPISKAVLGDDEITREPRKVVLHRGSTGLGFNIVGGEDGEGIFISFILAGGPADLSGELRKGDRIISVNSVDLRAASHEQAAAALKNAGQAVTIVAQYRPEEYSRFEAKIHDLRETMMNSSVSSGSGSLRTSQKRSLYVRALFDYDKTKDSGLPSQGLNFKFGDILHVINASDDEWWQARQVTPDGESDEVGVIPSKRRVEKKERARLKTVKFNSKTRGDKGEIPDDMGSKGLKHVTSNASDSESSYHEYGCSKGGQEEYVLSYEPVNQQEVNYTRPVIILGPMKDRVNDDLISEFPDKFGSCVPHTTRPKRDYEVDGRDYHFVTSREQMEKDIQEHKFIEAGQYNNHLYGTSVQSVRAVAEKGKHCILDVSGNAIKRLQIAQLYPISIFIKPKSMENIMEMNKRLTDEQARKTFERAVRLEQEFTEHFTAIVQGDTLEDIYNQVKQIIEEQSGPYIWVPAKEKL.

The region spanning 4 to 64 (RKQDTQRALH…FYEVTLLDNP (61 aa)) is the L27 domain. Ser-39 bears the Phosphoserine; by CaMK2 mark. Positions 70–105 (SKQCEPVQPGNPWESGSLSSAAVTSESLPGGLSPPV) are disordered. Polar residues predominate over residues 83–96 (ESGSLSSAAVTSES). 3 positions are modified to phosphoserine: Ser-122, Ser-138, and Ser-158. The tract at residues 162-212 (PTEAVPPSSPIVPVTPALPVPAESPVVLPSTPQANPPPVLVNTDSLETPTY) is interaction with SH3 domains. PDZ domains follow at residues 224–310 (EITL…VKRR) and 318–404 (EIKL…AAKP). The interval 224–545 (EITLERGNSG…QAVTIVAQYR (322 aa)) is required for interaction with MARCHF2. Ser-232 bears the Phosphoserine; by CaMK2 mark. Tyr-398 is subject to Phosphotyrosine. The span at 419–441 (TNSSSQSVDNHVSPSSYLGQTPA) shows a compositional bias: polar residues. Positions 419–443 (TNSSSQSVDNHVSPSSYLGQTPASP) are disordered. Residues 465–545 (KVVLHRGSTG…QAVTIVAQYR (81 aa)) form the PDZ 3 domain. Residues Ser-567, Ser-572, Ser-574, Ser-578, Ser-597, Ser-618, Ser-684, Ser-687, and Ser-841 each carry the phosphoserine modification. One can recognise an SH3 domain in the interval 580-650 (KRSLYVRALF…PSKRRVEKKE (71 aa)). A disordered region spans residues 662–696 (KTRGDKGEIPDDMGSKGLKHVTSNASDSESSYHEY). The region spanning 721-896 (TRPVIILGPM…IYNQVKQIIE (176 aa)) is the Guanylate kinase-like domain.

The protein belongs to the MAGUK family. In terms of assembly, homotetramer. Interacts (via guanylate kinase-like domain) with DLGAP1, DLGAP2, DLGAP3, DLGAP4 and MAP1A. Interacts (via guanylate kinase-like domain) with KIF13B. May interact with HTR2A. Interacts (via PDZ domains) with GRIA1. Interacts (via PDZ domains) with GRIN2A. Interacts (via PDZ domains) with KCND2 and KCND3. Interacts (via PDZ domains) with KCNA1, KCNA2, KCNA3 and KCNA4. Interacts (via PDZ domains) with ADGRA3. Interacts with KCNF1. Interacts with CAMK2. Interacts with cytoskeleton-associated protein EPB41. Interacts with cytoskeleton-associated protein EZR. Found in a complex with KCNA5 and CAV3. Found in a complex with APC and CTNNB1. Interacts (via PDZ domains) with APC. Interacts with CDH1 through binding to PIK3R1. Forms multiprotein complexes with CASK, LIN7A, LIN7B, LIN7C, APBA1, and KCNJ12. Interacts with TOPK. Forms a tripartite complex composed of DLG1, MPP7 and LIN7 (LIN7A or LIN7C). May interact with TJAP1. Interacts with PTEN. Interacts with FRMPD4 (via C-terminus). Interacts with LRFN1 and LRFN2. Interacts with LRFN4 and SFPQ. Interacts (via PDZ domains) with ADGRA2 (via PDZ-binding motif). Interacts with ADAM10; this interaction recruits ADAM10 to the cell membrane during long-term depression in hippocampal neurons. Interacts with DGKI (via PDZ-binding motif). Interacts (via PDZ domains) with MARCHF2 (via PDZ domain); the interaction leads to DLG1 ubiqtuitination and degradation. Interacts (via N-terminus) with MPP3; this interaction connects CADM1 with DLG1 and links CADM1 with the regulatory subunit of phosphoinositide-3-kinase (PI3K) by forming a multiprotein complex and participates in cell spreading. Phosphorylated by MAPK12. Phosphorylation of Ser-39 modulates transport to the plasma membrane. Phosphorylation of Ser-232 regulates association with GRIN2A. Post-translationally, ubiquitinated; by MARCHF2 which results in its degradation. As to expression, widely expressed. Strongly expressed in epithelial cells, in the small intestine it is only detected in the vili. Expressed in brain, heart (at protein level), muscle, lung and liver. In the brain it was detected in olfactory bulbs, cerebral cortex, hippocampus, and spinal cord (at protein level).

The protein localises to the cell membrane. Its subcellular location is the basolateral cell membrane. The protein resides in the endoplasmic reticulum membrane. It localises to the postsynaptic density. It is found in the synapse. The protein localises to the sarcolemma. Its subcellular location is the cell junction. The protein resides in the cytoplasm. It localises to the apical cell membrane. Essential multidomain scaffolding protein required for normal development. Recruits channels, receptors and signaling molecules to discrete plasma membrane domains in polarized cells. Promotes epithelial cell layer barrier function via maintaining cell-cell adhesion. May play a role in adherens junction assembly, signal transduction, cell proliferation, synaptogenesis and lymphocyte activation. Regulates the excitability of cardiac myocytes by modulating the functional expression of Kv4 channels. Functional regulator of Kv1.5 channel. During long-term depression in hippocampal neurons, it recruits ADAM10 to the plasma membrane. In Rattus norvegicus (Rat), this protein is Disks large homolog 1.